A 1021-amino-acid chain; its full sequence is Sodium/potassium-transporting ATPase subunit alpha-1 (1021 aa).

Positions 1–5 (MGKGG) are excised as a propeptide. Residues 1-11 (MGKGGGRDKYE) show a composition bias toward basic and acidic residues. The interval 1–37 (MGKGGGRDKYEPAAISEHGNKKKAKKERDMDELKKEV) is disordered. Topologically, residues 6–85 (GRDKYEPAAI…NALTPPPTTP (80 aa)) are cytoplasmic. Residue Lys9 is modified to N6-acetyllysine. Tyr10 bears the Phosphotyrosine mark. Position 16 is a phosphoserine; by PKC (Ser16). Lys21 is subject to N6-acetyllysine. Positions 26 to 37 (KERDMDELKKEV) are enriched in basic and acidic residues. A phosphoserine mark is found at Ser38 and Ser45. The segment at 80–82 (PPP) is phosphoinositide-3 kinase binding. A helical membrane pass occupies residues 86–106 (EWVKFCRQLFGGFSMLLWIGA). Topologically, residues 107 to 129 (ILCFLAYGIQAATEEEPQNDNLY) are extracellular. The chain crosses the membrane as a helical span at residues 130 to 150 (LGVVLSAVVIITGCFSYYQEA). Residues 151 to 286 (KSSKIMESFK…GGQTPIAAEI (136 aa)) lie on the Cytoplasmic side of the membrane. Positions 214-233 (SSLTGESEPQTRSPDFTNEN) are disordered. Ser226 bears the Phosphoserine mark. A Phosphotyrosine modification is found at Tyr258. The helical transmembrane segment at 287–306 (EHFIHIITGVAVFLGVTFFI) threads the bilayer. The Extracellular portion of the chain corresponds to 307–318 (LSLILEYTWLEA). The chain crosses the membrane as a helical span at residues 319-336 (VIFLIGIIVANVPEGLLA). The Cytoplasmic segment spans residues 337–770 (TVTVCLTLTA…EEGRLIFDNL (434 aa)). Asp374 acts as the 4-aspartylphosphate intermediate in catalysis. Ser450 and Ser482 each carry phosphoserine. Lys485 serves as a coordination point for ATP. The residue at position 540 (Tyr540) is a Phosphotyrosine. A mediates interaction with SCN7A region spans residues 594–715 (RAAVPDAVGK…QGAIVAVTGD (122 aa)). The residue at position 659 (Lys659) is an N6-succinyllysine. Phosphoserine is present on Ser666. Residues Asp715 and Asp719 each coordinate Mg(2+). The chain crosses the membrane as a helical span at residues 771-790 (KKSIAYTLTSNIPEITPFLI). Over 791-800 (FIIANIPLPL) the chain is Extracellular. The chain crosses the membrane as a helical span at residues 801–821 (GTVTILCIDLGTDMVPAISLA). Over 822-841 (YEQAESDIMKRQPRNPQTDK) the chain is Cytoplasmic. Residues 842–864 (LVNERLISMAYGQIGMIQALGGF) traverse the membrane as a helical segment. Topologically, residues 865-916 (FTYFVILAENGFLPIHLLGLRVDWDDRWVNDVEDSYGQQWTYEQRKIVEFTC) are extracellular. Residues 917-936 (HTAFFVSIVVVQWADLVICK) form a helical membrane-spanning segment. Residues 937–949 (TRRNSVFQQGMKN) are Cytoplasmic-facing. Position 941 is a phosphoserine; by PKA (Ser941). The chain crosses the membrane as a helical span at residues 950-968 (KILIFGLFEETALAAFLSY). Topologically, residues 969 to 983 (CPGMGVALRMYPLKP) are extracellular. A helical transmembrane segment spans residues 984–1004 (TWWFCAFPYSLLIFVYDEVRK). Residues 1005 to 1021 (LIIRRRPGGWVEKETYY) are Cytoplasmic-facing.

The protein belongs to the cation transport ATPase (P-type) (TC 3.A.3) family. Type IIC subfamily. The sodium/potassium-transporting ATPase is composed of a catalytic alpha subunit, an auxiliary non-catalytic beta subunit and an additional regulatory subunit. Interacts with regulatory subunit FXYD1. Interacts with regulatory subunit FXYD3. Interacts with SIK1. Interacts with SLC35G1 and STIM1. Interacts with CLN3; this interaction regulates the sodium/potassium-transporting ATPase complex localization at the plasma membrane. Interacts with SCN7A; activates ATP1A1 P-type sodium:potassium-exchanging transporter activity which indirectly signals to nearby neurons to regulate sodium homeostasis. In terms of processing, phosphorylation on Tyr-10 modulates pumping activity. Phosphorylation of Ser-941 by PKA modulates the response of ATP1A1 to PKC. Dephosphorylation by protein phosphatase 2A (PP2A) following increases in intracellular sodium, leading to increase catalytic activity.

Its subcellular location is the cell membrane. The protein resides in the basolateral cell membrane. It is found in the sarcolemma. The protein localises to the cell projection. It localises to the axon. Its subcellular location is the melanosome. The enzyme catalyses K(+)(out) + Na(+)(in) + ATP + H2O = K(+)(in) + Na(+)(out) + ADP + phosphate + H(+). Functionally, this is the catalytic component of the active enzyme, which catalyzes the hydrolysis of ATP coupled with the exchange of sodium and potassium ions across the plasma membrane. This action creates the electrochemical gradient of sodium and potassium ions, providing the energy for active transport of various nutrients. Could also be part of an osmosensory signaling pathway that senses body-fluid sodium levels and controls salt intake behavior as well as voluntary water intake to regulate sodium homeostasis. The protein is Sodium/potassium-transporting ATPase subunit alpha-1 (ATP1A1) of Equus caballus (Horse).